We begin with the raw amino-acid sequence, 290 residues long: Probable aquaporin PIP2-1 (290 aa).

A run of 2 helical transmembrane segments spans residues 43–63 (AVIA…ATVI) and 80–100 (CGGV…FILV). The NPA 1 motif lies at 112 to 114 (NPA). A run of 3 helical transmembrane segments spans residues 131-151 (ILYI…VKAF), 173-193 (GTGL…VFSA), and 207-227 (VLAP…TIPI). The NPA 2 motif lies at 233–235 (NPA). The chain crosses the membrane as a helical span at residues 255–275 (IFWVGPFVGAAIAAFYHQYIL).

It belongs to the MIP/aquaporin (TC 1.A.8) family. PIP (TC 1.A.8.11) subfamily. Expressed in roots, leaves and anthers.

It is found in the cell membrane. Functionally, aquaporins facilitate the transport of water and small neutral solutes across cell membranes. The polypeptide is Probable aquaporin PIP2-1 (PIP2-1) (Oryza sativa subsp. japonica (Rice)).